We begin with the raw amino-acid sequence, 172 residues long: Large ribosomal subunit protein uL10 (172 aa).

It belongs to the universal ribosomal protein uL10 family. In terms of assembly, part of the ribosomal stalk of the 50S ribosomal subunit. The N-terminus interacts with L11 and the large rRNA to form the base of the stalk. The C-terminus forms an elongated spine to which L12 dimers bind in a sequential fashion forming a multimeric L10(L12)X complex.

Functionally, forms part of the ribosomal stalk, playing a central role in the interaction of the ribosome with GTP-bound translation factors. This Rhizobium etli (strain CIAT 652) protein is Large ribosomal subunit protein uL10.